The chain runs to 121 residues: Large ribosomal subunit protein bL12 (121 aa).

The protein belongs to the bacterial ribosomal protein bL12 family. As to quaternary structure, homodimer. Part of the ribosomal stalk of the 50S ribosomal subunit. Forms a multimeric L10(L12)X complex, where L10 forms an elongated spine to which 2 to 4 L12 dimers bind in a sequential fashion. Binds GTP-bound translation factors.

Its function is as follows. Forms part of the ribosomal stalk which helps the ribosome interact with GTP-bound translation factors. Is thus essential for accurate translation. The chain is Large ribosomal subunit protein bL12 from Pseudomonas putida (strain GB-1).